The following is a 151-amino-acid chain: Aspartate 1-decarboxylase (151 aa).

Ser-26 acts as the Schiff-base intermediate with substrate; via pyruvic acid in catalysis. A Pyruvic acid (Ser) modification is found at Ser-26. Thr-58 serves as a coordination point for substrate. Tyr-59 functions as the Proton donor in the catalytic mechanism. A substrate-binding site is contributed by 74-76 (GGA).

It belongs to the PanD family. Heterooctamer of four alpha and four beta subunits. Pyruvate is required as a cofactor. Is synthesized initially as an inactive proenzyme, which is activated by self-cleavage at a specific serine bond to produce a beta-subunit with a hydroxyl group at its C-terminus and an alpha-subunit with a pyruvoyl group at its N-terminus.

The protein localises to the cytoplasm. The catalysed reaction is L-aspartate + H(+) = beta-alanine + CO2. It participates in cofactor biosynthesis; (R)-pantothenate biosynthesis; beta-alanine from L-aspartate: step 1/1. Functionally, catalyzes the pyruvoyl-dependent decarboxylation of aspartate to produce beta-alanine. In Crocosphaera subtropica (strain ATCC 51142 / BH68) (Cyanothece sp. (strain ATCC 51142)), this protein is Aspartate 1-decarboxylase.